The chain runs to 257 residues: Imidazole glycerol phosphate synthase subunit HisF (257 aa).

Residues aspartate 12 and aspartate 131 contribute to the active site.

This sequence belongs to the HisA/HisF family. In terms of assembly, heterodimer of HisH and HisF.

The protein localises to the cytoplasm. The enzyme catalyses 5-[(5-phospho-1-deoxy-D-ribulos-1-ylimino)methylamino]-1-(5-phospho-beta-D-ribosyl)imidazole-4-carboxamide + L-glutamine = D-erythro-1-(imidazol-4-yl)glycerol 3-phosphate + 5-amino-1-(5-phospho-beta-D-ribosyl)imidazole-4-carboxamide + L-glutamate + H(+). The protein operates within amino-acid biosynthesis; L-histidine biosynthesis; L-histidine from 5-phospho-alpha-D-ribose 1-diphosphate: step 5/9. Functionally, IGPS catalyzes the conversion of PRFAR and glutamine to IGP, AICAR and glutamate. The HisF subunit catalyzes the cyclization activity that produces IGP and AICAR from PRFAR using the ammonia provided by the HisH subunit. The chain is Imidazole glycerol phosphate synthase subunit HisF from Burkholderia mallei (strain NCTC 10247).